The sequence spans 277 residues: Small ribosomal subunit protein uS3 (277 aa).

The region spanning 43 to 111 is the KH type-2 domain; sequence IRQLMSTGME…QVQLNILEVK (69 aa). Over residues 218 to 228 the composition is skewed to low complexity; sequence QQAAAAPSRGR. The interval 218-277 is disordered; it reads QQAAAAPSRGRGASDRPGRPGGADRGDRRRRTDRPAAEAAPAAEAPAVEAAAPAVEGGQA. Residues 229–244 show a composition bias toward basic and acidic residues; the sequence is GASDRPGRPGGADRGD. Over residues 254-277 the composition is skewed to low complexity; that stretch reads AEAAPAAEAPAVEAAAPAVEGGQA.

It belongs to the universal ribosomal protein uS3 family. Part of the 30S ribosomal subunit. Forms a tight complex with proteins S10 and S14.

Its function is as follows. Binds the lower part of the 30S subunit head. Binds mRNA in the 70S ribosome, positioning it for translation. The sequence is that of Small ribosomal subunit protein uS3 from Arthrobacter sp. (strain FB24).